Consider the following 481-residue polypeptide: Serine/threonine-protein kinase US3 (481 aa).

The interval 12 to 63 is disordered; sequence RPDKRQEASVPPETNTAPAFPASTFYTPAEDAYLAPGPPETIHPSRPPSPGE. Residues 47–61 show a composition bias toward pro residues; that stretch reads PGPPETIHPSRPPSP. The 288-residue stretch at 191–478 folds into the Protein kinase domain; sequence FAIHGALIPG…AAELLRLPLF (288 aa). ATP contacts are provided by residues 197-205 and K220; that span reads LIPGSEGCV. Residue D305 is the Proton acceptor of the active site.

The protein belongs to the protein kinase superfamily. Ser/Thr protein kinase family. In terms of assembly, interacts with host LAT; this interaction prevents LAT activation of TRAF6. Post-translationally, phosphorylated by UL13; this phosphorylation regulates subsequent phosphorylation of UL31 and UL34 by US3. Autophosphorylated.

The protein resides in the host cytoplasm. The protein localises to the host nucleus. The catalysed reaction is L-seryl-[protein] + ATP = O-phospho-L-seryl-[protein] + ADP + H(+). It catalyses the reaction L-threonyl-[protein] + ATP = O-phospho-L-threonyl-[protein] + ADP + H(+). Multifunctional serine/threonine kinase that plays a role in several processes including egress of virus particles from the nucleus, modulation of the actin cytoskeleton and inhibition of host immune response. Phosphorylates UL31 and UL34, two critical regulators of capsid budding from nucleus to endoplasmic reticulum, thereby facilitating virion egress. Modulates and redistributes host components of the nuclear envelope, including LMNA, emerin/EMD and the nuclear matrix protein MATR3. In turn, facilitates nuclear pore impairment and capsid release through impaired nuclear envelope. Phosphorylates envelope glycoprotein B (gB), probably to direct it to the cell surface. Promotes virus intracellular spread by restructuring host cell cytoskeleton. Blocks host apoptosis to extend cell survival and allow efficient viral replication. Promotes viral gene expression by phosphorylating host HDAC2 to reduce viral genome silencing. Strongly inhibits TCR-activated signal transduction in T-cells by reducing the ubiquitination of LAT and TRAF6, leading to a suboptimal activation of LAT. Subverts host antiviral innate immunity by inhibiting type I interferon production through hyperphosphorylation of beta-catenin/CTNNB1. In addition, phosphorylates the RNA sensor RIGI and the transcription factor IRF3 to prevent the RLR-mediated antiviral signaling pathway. Hyperphosphorylates host RELA and thereby dampens NF-kappa-B signaling. Acts as an immunoevasin partly responsible for inhibition of MR1 expression and antigen presentation in response to bacterial infection. The sequence is that of Serine/threonine-protein kinase US3 (US3) from Human herpesvirus 2 (strain HG52) (HHV-2).